The chain runs to 56 residues: Large ribosomal subunit protein bL32 (56 aa).

A compositionally biased stretch (basic residues) spans 1–16 (MAVQKSKKSRSMRGMR). The disordered stretch occupies residues 1 to 22 (MAVQKSKKSRSMRGMRRSHDAL).

It belongs to the bacterial ribosomal protein bL32 family.

This is Large ribosomal subunit protein bL32 from Aliivibrio salmonicida (strain LFI1238) (Vibrio salmonicida (strain LFI1238)).